Consider the following 1488-residue polypeptide: Phenolphthiocerol/phthiocerol polyketide synthase subunit E (1488 aa).

The Ketosynthase family 3 (KS3) domain maps to 5-438 (ENAIAVVGMA…GTNAHVVLEE (434 aa)). Active-site for beta-ketoacyl synthase activity residues include C184, H320, and H361. The tract at residues 551–868 (VFLFPGQGAQ…GELWSAGVEV (318 aa)) is acyltransferase. The active-site For malonyltransferase activity is the S641. Residues 930–1004 (NGESQTEVTL…SLTAAVDASF (75 aa)) form the Carrier domain. S965 is modified (O-(pantetheine 4'-phosphoryl)serine). 1286–1331 (EGVVAVELEGEGRSVLRPDVDLRRTVGWFTTYYPVPLACATGLGAL) lines the NADP(+) pocket.

It depends on NADP(+) as a cofactor. Pantetheine 4'-phosphate serves as cofactor.

It carries out the reaction icosanoyl-[(phenol)carboxyphthiodiolenone synthase] + 2 (S)-methylmalonyl-CoA + 3 malonyl-CoA + 5 NADPH + 10 H(+) = C32-carboxyphthiodiolenone-[(phenol)carboxyphthiodiolenone synthase] + 5 CO2 + 5 NADP(+) + 5 CoA + 2 H2O. The enzyme catalyses docosanoyl-[(phenol)carboxyphthiodiolenone synthase] + 2 (S)-methylmalonyl-CoA + 3 malonyl-CoA + 5 NADPH + 10 H(+) = C34-carboxyphthiodiolenone-[(phenol)carboxyphthiodiolenone synthase] + 5 CO2 + 5 NADP(+) + 5 CoA + 2 H2O. The catalysed reaction is 17-(4-hydroxyphenyl)heptadecanoyl-[(phenol)carboxyphthiodiolenone synthase] + 2 (S)-methylmalonyl-CoA + 3 malonyl-CoA + 5 NADPH + 10 H(+) = C35-(phenol)carboxyphthiodiolenone-[(phenol)carboxyphthiodiolenone synthase] + 5 CO2 + 5 NADP(+) + 5 CoA + 2 H2O. It catalyses the reaction 19-(4-hydroxyphenyl)nonadecanoyl-[(phenol)carboxyphthiodiolenone synthase] + 2 (S)-methylmalonyl-CoA + 3 malonyl-CoA + 5 NADPH + 10 H(+) = C37-(phenol)carboxyphthiodiolenone-[(phenol)carboxyphthiodiolenone synthase] + 5 CO2 + 5 NADP(+) + 5 CoA + 2 H2O. It participates in lipid metabolism; fatty acid biosynthesis. Functionally, part of the PpsABCDE complex involved in the biosynthesis of the lipid core common to phthiocerols and phenolphthiocerols by successive additions of malonyl-CoA or methylmalonyl-CoA extender units. PpsA can accept as substrate the activated forms of either icosanoyl (C20), docosanoyl (C22) or lignoceroyl (C24) groups from FadD26, or a (4-hydroxyphenyl)-C17 or (4-hydroxyphenyl)-C19 fatty acyl from FadD29. PpsA initiates the biosynthesis and extends its substrate using a malonyl-CoA extender unit. The PpsB and PpsC proteins add the second and third malonyl-CoA extender units. PpsD adds an (R)-methylmalonyl unit and PpsE adds a second (R)-methylmalonyl unit. The incorporation of the methylmalonyl units results in formation of two branched methyl groups in the elongated product. This is Phenolphthiocerol/phthiocerol polyketide synthase subunit E (ppsE) from Mycobacterium tuberculosis (strain CDC 1551 / Oshkosh).